The following is a 47-amino-acid chain: Defensin-like protein 1 (47 aa).

4 disulfides stabilise this stretch: C3–C47, C14–C34, C20–C41, and C24–C43.

In terms of assembly, monomer and homodimer.

Its function is as follows. Inhibits trypsin but not chymotrypsin. This chain is Defensin-like protein 1, found in Vigna unguiculata (Cowpea).